We begin with the raw amino-acid sequence, 165 residues long: Probable cell wall protein PGA15 (165 aa).

An N-terminal signal peptide occupies residues 1-16 (MKFIIILFTLISIVTA). Ser143 is lipidated: GPI-anchor amidated serine. Residues 144 to 165 (GAANYLTSFSIGTFFVFVLGLI) constitute a propeptide, removed in mature form.

It belongs to the IHD1 family. In terms of processing, the GPI-anchor is attached to the protein in the endoplasmic reticulum and serves to target the protein to the cell surface. There, the glucosamine-inositol phospholipid moiety is cleaved off and the GPI-modified mannoprotein is covalently attached via its lipidless GPI glycan remnant to the 1,6-beta-glucan of the outer cell wall layer.

The protein resides in the secreted. It localises to the cell wall. The protein localises to the membrane. In terms of biological role, probable GPI-anchored cell wall protein that may be involved in cell wall organization, hyphal growth, as well as in virulence. The polypeptide is Probable cell wall protein PGA15 (PGA15) (Candida albicans (strain SC5314 / ATCC MYA-2876) (Yeast)).